Reading from the N-terminus, the 233-residue chain is LOB domain-containing protein 40 (233 aa).

An LOB domain is found at 3–109 (MSCNGCRVLR…VEAVMRGSPV (107 aa)). Residues 143–160 (KRRSRGACKEERNVRSLS) are compositionally biased toward basic and acidic residues. Residues 143 to 183 (KRRSRGACKEERNVRSLSHESSLSHESPVSSEETTTEEPKT) are disordered. Over residues 161 to 175 (HESSLSHESPVSSEE) the composition is skewed to low complexity.

This sequence belongs to the LOB domain-containing protein family. In terms of tissue distribution, expressed in roots and flowers.

This is LOB domain-containing protein 40 (LBD40) from Arabidopsis thaliana (Mouse-ear cress).